The following is a 147-amino-acid chain: Large ribosomal subunit protein bL9 (147 aa).

It belongs to the bacterial ribosomal protein bL9 family.

Binds to the 23S rRNA. The sequence is that of Large ribosomal subunit protein bL9 from Nitratiruptor sp. (strain SB155-2).